Reading from the N-terminus, the 177-residue chain is ATP synthase subunit b (177 aa).

Residues 16 to 36 (HLLLANMIVTIVVFLLLLILL) form a helical membrane-spanning segment.

This sequence belongs to the ATPase B chain family. As to quaternary structure, F-type ATPases have 2 components, F(1) - the catalytic core - and F(0) - the membrane proton channel. F(1) has five subunits: alpha(3), beta(3), gamma(1), delta(1), epsilon(1). F(0) has three main subunits: a(1), b(2) and c(10-14). The alpha and beta chains form an alternating ring which encloses part of the gamma chain. F(1) is attached to F(0) by a central stalk formed by the gamma and epsilon chains, while a peripheral stalk is formed by the delta and b chains.

The protein localises to the cell membrane. F(1)F(0) ATP synthase produces ATP from ADP in the presence of a proton or sodium gradient. F-type ATPases consist of two structural domains, F(1) containing the extramembraneous catalytic core and F(0) containing the membrane proton channel, linked together by a central stalk and a peripheral stalk. During catalysis, ATP synthesis in the catalytic domain of F(1) is coupled via a rotary mechanism of the central stalk subunits to proton translocation. Its function is as follows. Component of the F(0) channel, it forms part of the peripheral stalk, linking F(1) to F(0). In Exiguobacterium sibiricum (strain DSM 17290 / CCUG 55495 / CIP 109462 / JCM 13490 / 255-15), this protein is ATP synthase subunit b.